The chain runs to 360 residues: Membrane-bound lytic murein transglycosylase C (360 aa).

Residues 1 to 16 (MKKFFALALVAPLLIS) form the signal peptide. Cysteine 17 carries the N-palmitoyl cysteine lipid modification. Residue cysteine 17 is the site of S-diacylglycerol cysteine attachment.

Belongs to the transglycosylase Slt family.

It is found in the cell outer membrane. The enzyme catalyses Exolytic cleavage of the (1-&gt;4)-beta-glycosidic linkage between N-acetylmuramic acid (MurNAc) and N-acetylglucosamine (GlcNAc) residues in peptidoglycan, from either the reducing or the non-reducing ends of the peptidoglycan chains, with concomitant formation of a 1,6-anhydrobond in the MurNAc residue.. Functionally, murein-degrading enzyme. May play a role in recycling of muropeptides during cell elongation and/or cell division. The sequence is that of Membrane-bound lytic murein transglycosylase C from Citrobacter koseri (strain ATCC BAA-895 / CDC 4225-83 / SGSC4696).